The primary structure comprises 927 residues: Translation initiation factor IF-2 (927 aa).

Positions 27–337 (LGLPVKSHAS…GAPKPVTERK (311 aa)) are disordered. The segment covering 49–69 (SFSSSKTKAPTNSVQTNQGVK) has biased composition (polar residues). Basic and acidic residues-rich tracts occupy residues 70 to 86 (TESKTVETKQGLSDDKP) and 101 to 138 (FKAEREARAKAEAEKRQHNGDHRKNNRHNDTRSDDRRH). The span at 146-159 (GNRNDNRQGQQNNR) shows a compositional bias: low complexity. Basic and acidic residues-rich tracts occupy residues 160–171 (NKNDGRYADHKQ), 202–226 (YSRHSEQRFREEQEAKRQAAKEQEL), and 234–257 (AQEEAQKAKEKLASKPVAKVKEIV). Over residues 300-316 (NWNNQNQVRNQRNSNWN) the composition is skewed to low complexity. The region spanning 428 to 597 (ERPPVVTIMG…LLVAEMEELK (170 aa)) is the tr-type G domain. Residues 437 to 444 (GHVDHGKT) are G1. 437–444 (GHVDHGKT) lines the GTP pocket. The G2 stretch occupies residues 462-466 (GITQH). The tract at residues 483 to 486 (DTPG) is G3. Residues 483 to 487 (DTPGH) and 537 to 540 (NKID) each bind GTP. The segment at 537–540 (NKID) is G4. Residues 573–575 (SAK) form a G5 region.

Belongs to the TRAFAC class translation factor GTPase superfamily. Classic translation factor GTPase family. IF-2 subfamily.

It localises to the cytoplasm. Its function is as follows. One of the essential components for the initiation of protein synthesis. Protects formylmethionyl-tRNA from spontaneous hydrolysis and promotes its binding to the 30S ribosomal subunits. Also involved in the hydrolysis of GTP during the formation of the 70S ribosomal complex. The polypeptide is Translation initiation factor IF-2 (Streptococcus agalactiae serotype V (strain ATCC BAA-611 / 2603 V/R)).